The chain runs to 218 residues: Adenylate kinase (218 aa).

Residue Gly10–Thr15 participates in ATP binding. Positions Ser30 to Val59 are NMP. Residues Thr31, Arg36, Gly57–Val59, Gly85–Arg88, and Gln92 contribute to the AMP site. The interval Gly122–Asp159 is LID. Residues Arg123 and Thr132–Tyr133 contribute to the ATP site. AMP contacts are provided by Arg156 and Arg167. Residue Gly203 participates in ATP binding.

It belongs to the adenylate kinase family. In terms of assembly, monomer.

The protein localises to the cytoplasm. The enzyme catalyses AMP + ATP = 2 ADP. It participates in purine metabolism; AMP biosynthesis via salvage pathway; AMP from ADP: step 1/1. Catalyzes the reversible transfer of the terminal phosphate group between ATP and AMP. Plays an important role in cellular energy homeostasis and in adenine nucleotide metabolism. This Chlorobaculum tepidum (strain ATCC 49652 / DSM 12025 / NBRC 103806 / TLS) (Chlorobium tepidum) protein is Adenylate kinase.